A 62-amino-acid chain; its full sequence is MAKKLAITLTRSVIGRPEDQRVTVRTLGLRKMHQTVIHNDNPAIRGMINKVAHLVKVKEIEE.

It belongs to the universal ribosomal protein uL30 family. In terms of assembly, part of the 50S ribosomal subunit.

In Geobacillus kaustophilus (strain HTA426), this protein is Large ribosomal subunit protein uL30.